We begin with the raw amino-acid sequence, 780 residues long: Myosin heavy chain kinase C (780 aa).

The Alpha-type protein kinase domain occupies 40-243 (IGDDLKPKWT…VCDFLKLKPI (204 aa)). A disordered region spans residues 310–495 (RIRAQQQQKS…MEQTPDRSEF (186 aa)). Residues 337-350 (QQSPSSPTSKPVPQ) are compositionally biased toward low complexity. Residues 353–376 (KTPSQSNVVNKSPVSPPKENSNVK) are compositionally biased toward polar residues. Over residues 380 to 436 (DNINNNNSSISSNNDNSNNNNNNNDNINNSSNSSSVNSNSSSVSSSSSSSSSSSSSS) the composition is skewed to low complexity. Positions 437–450 (TTNAAPISIQVSRN) are enriched in polar residues. Low complexity predominate over residues 458–488 (IQPSSAAASASSTSSSNVPTPESTSTSSMEQ). WD repeat units follow at residues 507–546 (DTVR…HVTN), 549–589 (AHGK…TIKE), 591–628 (KESN…CVKT), 631–668 (GHTR…ILTN), 671–708 (GHEG…CVNT), and 748–780 (NTRS…WDKM).

It belongs to the protein kinase superfamily. Alpha-type protein kinase family. ALPK subfamily. As to quaternary structure, interacts with myosin II heavy chain (mhcA). Post-translationally, autophosphorylated in vitro.

The protein localises to the cytoplasm. It localises to the cell cortex. It is found in the membrane. The protein resides in the cleavage furrow. It catalyses the reaction L-threonyl-[myosin heavy-chain] + ATP = O-phospho-L-threonyl-[myosin heavy-chain] + ADP + H(+). In terms of biological role, phosphorylates threonine at 'Thr-1823', 'Thr-1833' and 'Thr-2029' in the C-terminal tail region of myosin II heavy chain (mhcA). This phosphorylation is critical in actin-activated ATPase activity of the myosin and regulating the assembly and disassembly of myosin II filament. In vitro, catalytic domain phosphorylates mhcA, myelin basic protein, myosin regulatory light chain, casein and caldesmon. Drives the disassembly of myosin II filaments for efficient cytokinesis and recycling of myosin II that occurs during late cytokinesis. Can be activated in vitro by autophosphorylation. This Dictyostelium discoideum (Social amoeba) protein is Myosin heavy chain kinase C (mhkC).